The primary structure comprises 259 residues: Large ribosomal subunit protein uL4 (259 aa).

A disordered region spans residues Trp47–Gly67.

This sequence belongs to the universal ribosomal protein uL4 family. In terms of assembly, part of the 50S ribosomal subunit.

In terms of biological role, one of the primary rRNA binding proteins, this protein initially binds near the 5'-end of the 23S rRNA. It is important during the early stages of 50S assembly. It makes multiple contacts with different domains of the 23S rRNA in the assembled 50S subunit and ribosome. Its function is as follows. Forms part of the polypeptide exit tunnel. In Methanosphaera stadtmanae (strain ATCC 43021 / DSM 3091 / JCM 11832 / MCB-3), this protein is Large ribosomal subunit protein uL4.